We begin with the raw amino-acid sequence, 630 residues long: 1-deoxy-D-xylulose-5-phosphate synthase (630 aa).

Thiamine diphosphate-binding positions include H87 and 128-130 (GHS). D159 contributes to the Mg(2+) binding site. Thiamine diphosphate is bound by residues 160 to 161 (GA), N188, F295, and E377. Position 188 (N188) interacts with Mg(2+).

This sequence belongs to the transketolase family. DXPS subfamily. In terms of assembly, homodimer. It depends on Mg(2+) as a cofactor. The cofactor is thiamine diphosphate.

The catalysed reaction is D-glyceraldehyde 3-phosphate + pyruvate + H(+) = 1-deoxy-D-xylulose 5-phosphate + CO2. The protein operates within metabolic intermediate biosynthesis; 1-deoxy-D-xylulose 5-phosphate biosynthesis; 1-deoxy-D-xylulose 5-phosphate from D-glyceraldehyde 3-phosphate and pyruvate: step 1/1. Functionally, catalyzes the acyloin condensation reaction between C atoms 2 and 3 of pyruvate and glyceraldehyde 3-phosphate to yield 1-deoxy-D-xylulose-5-phosphate (DXP). The protein is 1-deoxy-D-xylulose-5-phosphate synthase of Pseudomonas syringae pv. syringae (strain B728a).